The chain runs to 445 residues: Inner membrane metabolite transport protein YgcS (445 aa).

Topologically, residues 1-22 are cytoplasmic; sequence MNTSPVRMDDLPLNRFHCRIAA. The chain crosses the membrane as a helical span at residues 23–43; that stretch reads LTFGAHLTDGYVLGVIGYAII. Residues 44 to 56 are Periplasmic-facing; the sequence is QLTPAMQLTPFMA. The chain crosses the membrane as a helical span at residues 57 to 77; sequence GMIGGSALLGLFLGSLVLGWI. Residues 78–85 are Cytoplasmic-facing; it reads SDHIGRQK. A helical membrane pass occupies residues 86–106; sequence IFTFSFLLITLASFLQFFATT. Topologically, residues 107–114 are periplasmic; sequence PEHLIGLR. Residues 115-135 form a helical membrane-spanning segment; sequence ILIGIGLGGDYSVGHTLLAEF. At 136–142 the chain is on the cytoplasmic side; that stretch reads SPRRHRG. Residues 143–163 traverse the membrane as a helical segment; it reads ILLGAFSVVWTVGYVLASIAG. Over 164–175 the chain is Periplasmic; it reads HHFISENPEAWR. The helical transmembrane segment at 176–196 threads the bilayer; that stretch reads WLLASAALPALLITLLRWGTP. Over 197–253 the chain is Cytoplasmic; it reads ESPRWLLRQGRFAEAHAIVHRYFGPHVLLGDEVVTATHKHIKTLFSSRYWRRTAFNS. A helical membrane pass occupies residues 254 to 274; it reads VFFVCLVIPWFVIYTWLPTIA. The Periplasmic portion of the chain corresponds to 275 to 286; sequence QTIGLEDALTAS. Residues 287-307 form a helical membrane-spanning segment; that stretch reads LMLNALLIVGALLGLVLTHLL. The Cytoplasmic portion of the chain corresponds to 308-311; the sequence is AHRK. The chain crosses the membrane as a helical span at residues 312–332; sequence FLLGSFLLLAATLVVMACLPS. The Periplasmic portion of the chain corresponds to 333 to 337; that stretch reads GSSLT. A helical transmembrane segment spans residues 338 to 358; sequence LLLFVLFSTTISAVSNLVGIL. The Cytoplasmic portion of the chain corresponds to 359–369; sequence PAESFPTDIRS. Residues 370-390 traverse the membrane as a helical segment; that stretch reads LGVGFATAMSRLGAAVSTGLL. Residues 391–400 are Periplasmic-facing; the sequence is PWVLAQWGMQ. Residues 401–421 traverse the membrane as a helical segment; it reads VTLLLLATVLLVGFVVTWLWA. The Cytoplasmic portion of the chain corresponds to 422–445; that stretch reads PETKALPLVAAGNVGGANEHSVSV.

The protein belongs to the major facilitator superfamily. Sugar transporter (TC 2.A.1.1) family.

The protein localises to the cell inner membrane. In Escherichia coli (strain K12), this protein is Inner membrane metabolite transport protein YgcS (ygcS).